We begin with the raw amino-acid sequence, 493 residues long: Leucine-rich repeat-containing protein 14 (493 aa).

One copy of the LRR 1; degenerate repeat lies at 111 to 146 (KHTLRVLDMTGLLDDGVEQDPGTMSMWDCTAAVART). The stretch at 194-218 (RLCCRDLRAEDLPMRNTVALLQLLD) is one LRR 2; degenerate repeat. Residues 219–246 (AGCLRRVDLRFNNLGLRGLSVIIPHVAR) form an LRR 3; degenerate repeat. Residues 247-282 (FQHLASLRLHYVHGDSRQPSVDGEDNFRYFLAQMGR) form an LRR 4; degenerate repeat. 5 LRR repeats span residues 283–307 (FTCLRELSMGSSLLSGRLDQLLSTL), 308–339 (QSPLESLELAFCALLPEDLRFLARSSHAVHLK), 340–360 (KLDLSGNDLSGSQLEPFQGLL), 364–391 (AATLLHLELTECQLADTQLLATLPVLTR), and 392–416 (CASLRYLGLYGNPLSVAGLRELLRD).

Belongs to the PRAME family. LRRC14 subfamily. Interacts with IKBKB; disrupts IKBKB-IKBKG interaction preventing I-kappa-B-kinase (IKK) core complex formation and leading to a decrease of IKBKB phosphorylation and NF-kappaB activation. Interacts with CHUK.

The protein localises to the cytoplasm. In terms of biological role, negatively regulates Toll-like receptor-mediated NF-kappa-B signaling by disrupting IKK core complex formation through interaction with IKBKB. This Bos taurus (Bovine) protein is Leucine-rich repeat-containing protein 14.